Reading from the N-terminus, the 894-residue chain is LRR receptor-like serine/threonine-protein kinase IOS1 (894 aa).

Positions 1–23 (MAFSSCFLLVLLQIFSALLLCLA) are cleaved as a signal peptide. Residues 24 to 515 (QDQSGFISLD…KKKKNTVIAP (492 aa)) are Extracellular-facing. 14 N-linked (GlcNAc...) asparagine glycosylation sites follow: Asn48, Asn95, Asn137, Asn179, Asn223, Asn230, Asn260, Asn287, Asn309, Asn338, Asn399, Asn441, Asn462, and Asn469. LRR repeat units follow at residues 431 to 457 (LTSLEVLDLSNNSLTGSVPEFLANMET) and 459 to 479 (KLINLSGNELNGSIPATLLDK). A helical membrane pass occupies residues 516–536 (VAASLVSVFLIGAGIVTFLIL). At 537-894 (KRKKRTKLGL…FTTELNPGAR (358 aa)) the chain is on the cytoplasmic side. Thr577 carries the post-translational modification Phosphothreonine. Positions 586-858 (NNFERVLGRG…QVVMDLKECL (273 aa)) constitute a Protein kinase domain. Residues 592–600 (LGRGGFGVV) and Lys613 contribute to the ATP site. Tyr658 is subject to Phosphotyrosine. Catalysis depends on Asp710, which acts as the Proton acceptor. Ser744 carries the phosphoserine modification. Residues Thr745 and Thr750 each carry the phosphothreonine modification. Tyr758 carries the phosphotyrosine modification.

It belongs to the protein kinase superfamily. Ser/Thr protein kinase family. Homodimerization. Interacts with BAK1 and FLS2; triggers FLS2-BAK1 complex formation upon microbe-associated molecular patterns (MAMPs) treatment. Also binds to CERK1 and EFR. As to expression, expressed in roots, cotyledons, leaves, flowers and siliques.

It localises to the cell membrane. In terms of biological role, negatively regulates the abscisic acid (ABA) signaling pathway. Required for full susceptibility to filamentous (hemi)biotrophic oomycetes (e.g. H.arabidopsidis and P.parasitica) and fungal (e.g. E.cruciferarum) pathogens, probably by triggering the repression of ABA-sensitive COLD REGULATED and RESISTANCE TO DESICCATION genes during infection, but independently of immune responses. Involved in BAK1-dependent and BAK1-independent microbe-associated molecular patterns (MAMPs)-triggered immunity (PTI) leading to defense responses, including callose deposition and MAPK cascade activation, toward pathogenic bacteria (e.g. P.syringae). Required for chitin-mediated PTI. The protein is LRR receptor-like serine/threonine-protein kinase IOS1 of Arabidopsis thaliana (Mouse-ear cress).